Consider the following 406-residue polypeptide: Histidine--tRNA ligase (406 aa).

This sequence belongs to the class-II aminoacyl-tRNA synthetase family. In terms of assembly, homodimer.

The protein resides in the cytoplasm. It carries out the reaction tRNA(His) + L-histidine + ATP = L-histidyl-tRNA(His) + AMP + diphosphate + H(+). The polypeptide is Histidine--tRNA ligase (Nitratiruptor sp. (strain SB155-2)).